Reading from the N-terminus, the 464-residue chain is Elongation factor 1-alpha (464 aa).

A tr-type G domain is found at K5–T242. Residues G14–S21, D91–H95, and N153–D156 contribute to the GTP site. A 5-glutamyl glycerylphosphorylethanolamine mark is found at E301 and E374.

Belongs to the TRAFAC class translation factor GTPase superfamily. Classic translation factor GTPase family. EF-Tu/EF-1A subfamily.

The protein resides in the cytoplasm. Its function is as follows. This protein promotes the GTP-dependent binding of aminoacyl-tRNA to the A-site of ribosomes during protein biosynthesis. This chain is Elongation factor 1-alpha, found in Onchocerca volvulus.